The sequence spans 446 residues: 5-hydroxytryptamine receptor (446 aa).

Over 1–65 (MEGAEGQEEL…AALVRAAAKA (65 aa)) the chain is Extracellular. 4 N-linked (GlcNAc...) asparagine glycosylation sites follow: asparagine 23, asparagine 27, asparagine 36, and asparagine 42. A helical transmembrane segment spans residues 66-88 (VVLGLLILATVVGNVFVIAAILL). The Cytoplasmic segment spans residues 89 to 98 (ERHLRSAANN). A helical membrane pass occupies residues 99-120 (LILSLAVADLLVACLVMPLGAV). At 121–135 (YEVVQRWTLGPELCD) the chain is on the extracellular side. A disulfide bridge connects residues cysteine 134 and cysteine 214. Residues 136–157 (MWTSGDVLCCTASILHLVAIAL) form a helical membrane-spanning segment. Over 158 to 176 (DRYWAVTNIDYIHASTAKR) the chain is Cytoplasmic. The chain crosses the membrane as a helical span at residues 177 to 199 (VGMMIACVWTVSFFVCIAQLLGW). Residues 200 to 227 (KDPDWNQRVSEDLRCVVSQDVGYQIFAT) lie on the Extracellular side of the membrane. A helical transmembrane segment spans residues 228–249 (ASSFYVPVLIILILYWRIYQTA). Residues 250–367 (RKRIRRRRGA…SKRERKAAKT (118 aa)) lie on the Cytoplasmic side of the membrane. Over residues 304-324 (TTTGFTNVSSNNTSPEKQSCA) the composition is skewed to polar residues. Residues 304–329 (TTTGFTNVSSNNTSPEKQSCANGLEA) are disordered. The chain crosses the membrane as a helical span at residues 368-391 (LAIITGAFVACWLPFFVLAILVPT). Residues 392–399 (CDCEVSPV) lie on the Extracellular side of the membrane. A helical membrane pass occupies residues 400 to 422 (LTSLSLWLGYFNSTLNPVIYTVF). At 423 to 446 (SPEFRHAFQRLLCGRRVRRRRAPQ) the chain is on the cytoplasmic side.

This sequence belongs to the G-protein coupled receptor 1 family.

Its subcellular location is the cell membrane. Functionally, this is a receptor for 5-hydroxytryptamine (serotonin), a biogenic hormone that function as a neurotransmitter, a hormone, and a mitogen. The sequence is that of 5-hydroxytryptamine receptor from Bombyx mori (Silk moth).